Reading from the N-terminus, the 121-residue chain is Small ribosomal subunit protein uS13 (121 aa).

Residues 91 to 121 (HRKGLPVRGQRTRTNARTRKGKKKTVAGKKK) form a disordered region.

The protein belongs to the universal ribosomal protein uS13 family. In terms of assembly, part of the 30S ribosomal subunit. Forms a loose heterodimer with protein S19. Forms two bridges to the 50S subunit in the 70S ribosome.

Functionally, located at the top of the head of the 30S subunit, it contacts several helices of the 16S rRNA. In the 70S ribosome it contacts the 23S rRNA (bridge B1a) and protein L5 of the 50S subunit (bridge B1b), connecting the 2 subunits; these bridges are implicated in subunit movement. Contacts the tRNAs in the A and P-sites. This chain is Small ribosomal subunit protein uS13, found in Treponema denticola (strain ATCC 35405 / DSM 14222 / CIP 103919 / JCM 8153 / KCTC 15104).